The primary structure comprises 167 residues: I-Kappa-B like protein F2 (167 aa).

ANK repeat units lie at residues 54–86 (HGKQCVHIVSNPGIADPQEKLKLLMEWGADING), 91–121 (FGNTPLHIAAYTQNHKLATWLCNQPGINMGI), and 125–154 (LFKTPYYVACERHDLKIMNILRAKGTRCGV).

This sequence belongs to the polydnaviridae I-Kappa-B-like protein family.

Functionally, suppresses the host immune response through NF-kappa-B inactivation. Possesses ankyrin repeat domains required for NF-kappa-B binding but lacks the regulatory regions required for dissociation from NF-kappa-B and degradation. Therefore, prevents host NF-kappa-B release and subsequent activation. In Microplitis demolitor bracovirus (isolate Webb) (MdBV), this protein is I-Kappa-B like protein F2 (F3).